The sequence spans 514 residues: Carboxysome shell carbonic anhydrase (514 aa).

Residues 1–144 are N-terminal domain; the sequence is MNTRNTRSKQ…LTAATEQFSR (144 aa). The catalytic domain stretch occupies residues 151–397; sequence DDSASAIGFF…GRYPPNDIGH (247 aa). Position 173 (Cys-173) interacts with Zn(2+). Residue Asp-175 is the Proton acceptor of the active site. Zn(2+) is bound by residues His-242 and Cys-253. Positions 398-514 are C-terminal domain; it reads AERYISVGDG…GSPIEEVASA (117 aa).

The protein belongs to the beta-class carbonic anhydrase family. CsoSCA subfamily. In terms of assembly, homodimer, may form filaments. It depends on Zn(2+) as a cofactor.

It is found in the carboxysome. It carries out the reaction hydrogencarbonate + H(+) = CO2 + H2O. With respect to regulation, carbonic anhydrase activity is inhibited by ethoxyzolamide, dithiothreitol, cyanide, and divalent metal chelators dipicolinic acid and nitrilotriacetic acid. Reversible hydration of carbon dioxide. Essential for chemolithotrophic carbon dioxide fixation, supplies CO(2) to RuBisCO (ribulose bisphosphate carboxylase, cbbL-cbbS) in the carboxysome. There are estimated to be 40 CsoSCA dimers per carboxysome. Functionally, unlike beta-carboxysomes, alpha-carboxysomes (Cb) can form without cargo protein. CsoS2 is essential for Cb formation and is also capable of targeting foreign proteins to the Cb. The Cb shell assembles with the aid of CsoS2; CsoS1A, CsoS1B and CsoS1C form the majority of the shell while CsoS4A and CsoS4B form vertices. CsoS1D forms pseudohexamers that probably control metabolite flux into and out of the shell. This chain is Carboxysome shell carbonic anhydrase, found in Halothiobacillus neapolitanus (strain ATCC 23641 / c2) (Thiobacillus neapolitanus).